Consider the following 187-residue polypeptide: Elongation factor P (187 aa).

It belongs to the elongation factor P family.

Its subcellular location is the cytoplasm. It functions in the pathway protein biosynthesis; polypeptide chain elongation. In terms of biological role, involved in peptide bond synthesis. Stimulates efficient translation and peptide-bond synthesis on native or reconstituted 70S ribosomes in vitro. Probably functions indirectly by altering the affinity of the ribosome for aminoacyl-tRNA, thus increasing their reactivity as acceptors for peptidyl transferase. This Parafrankia sp. (strain EAN1pec) protein is Elongation factor P.